Consider the following 111-residue polypeptide: Disintegrin acostatin-alpha (111 aa).

An N-terminal signal peptide occupies residues M1–S20. A propeptide spanning residues I21–A46 is cleaved from the precursor. The region spanning I47–A111 is the Disintegrin domain. At Q48 the chain carries Pyrrolidone carboxylic acid; in Disintegrin acostatin-alpha, processed form. Disulfide bonds link C53–C76, C67–C73, C72–C97, and C85–C104. Residues R89–D91 carry the Cell attachment site motif. The propeptide occupies Y110–A111.

The protein belongs to the disintegrin family. Dimeric disintegrin subfamily. As to quaternary structure, heterodimer with subunit beta; disulfide-linked. As to expression, expressed by the venom gland.

It is found in the secreted. In terms of biological role, inhibits fibrinogen interaction with platelets. Acts by binding to alpha-IIb/beta-3 (ITGA2B/ITGB3) on the platelet surface and inhibits ADP-induced platelet aggregation in human platelet-rich plasma. The chain is Disintegrin acostatin-alpha from Agkistrodon contortrix contortrix (Southern copperhead).